Here is a 445-residue protein sequence, read N- to C-terminus: Dolichyl-diphosphooligosaccharide--protein glycosyltransferase 48 kDa subunit (445 aa).

The signal sequence occupies residues 1 to 32 (MRRRRKMEAGAAARAWSLLWLLLPLLGPVCAS). Topologically, residues 33-415 (GPRTLVLLDN…QYERFIPSAY (383 aa)) are lumenal. Residues 416–436 (PYYASAFSMMLGLFIFSTVFL) form a helical membrane-spanning segment. Over 437–445 (HMKEKEKSD) the chain is Cytoplasmic.

This sequence belongs to the DDOST 48 kDa subunit family. As to quaternary structure, component of the oligosaccharyltransferase (OST) complex. OST exists in two different complex forms which contain common core subunits RPN1, RPN2, OST48, OST4, DAD1 and TMEM258, either STT3A or STT3B as catalytic subunits, and form-specific accessory subunits. STT3A complex assembly occurs through the formation of 3 subcomplexes. Subcomplex 1 contains RPN1 and TMEM258, subcomplex 2 contains the STT3A-specific subunits STT3A, DC2/OSTC, and KCP2 as well as the core subunit OST4, and subcomplex 3 contains RPN2, DAD1, and OST48. The STT3A complex can form stable complexes with the Sec61 complex or with both the Sec61 and TRAP complexes. Interacts with SMIM22.

The protein localises to the endoplasmic reticulum. It is found in the endoplasmic reticulum membrane. It functions in the pathway protein modification; protein glycosylation. Its function is as follows. Subunit of the oligosaccharyl transferase (OST) complex that catalyzes the initial transfer of a defined glycan (Glc(3)Man(9)GlcNAc(2) in eukaryotes) from the lipid carrier dolichol-pyrophosphate to an asparagine residue within an Asn-X-Ser/Thr consensus motif in nascent polypeptide chains, the first step in protein N-glycosylation. N-glycosylation occurs cotranslationally and the complex associates with the Sec61 complex at the channel-forming translocon complex that mediates protein translocation across the endoplasmic reticulum (ER). All subunits are required for a maximal enzyme activity. Required for the assembly of both SST3A- and SS3B-containing OST complexes. This chain is Dolichyl-diphosphooligosaccharide--protein glycosyltransferase 48 kDa subunit, found in Canis lupus familiaris (Dog).